The following is a 303-amino-acid chain: Magainins (303 aa).

Residues 1–18 (MFKGLFICSLIAVICANA) form the signal peptide. Propeptides lie at residues 19–26 (LPQPEASA), 33–36 (REVR), 62–72 (DAEAVGPEAFA), 79–82 (REVR), 108–118 (DAEAVGPEAFA), 125–128 (REVR), 154–164 (DAEAVGPEAFA), 171–174 (REVR), 200–210 (DAEAVGPEAFA), 217–220 (REVR), 246–256 (DAEAVGPEAFA), 263–266 (REVR), and 292–303 (DAEAVDDRRWVE).

It belongs to the gastrin/cholecystokinin family. Magainin subfamily. Synthesized in the stomach and stored in a novel granular multinucleated cell in the gastric mucosa. It is stored as active, processed peptides in large granules within the granular gland secretions of the skin.

The protein localises to the secreted. Its function is as follows. Antimicrobial peptides that inhibit the growth of numerous species of bacteria and fungi and induce osmotic lysis of protozoa. Rapidly inactivates channel catfish herpesvirus (ED(50)=48 uM) over a wide temperature range. Magainins are membrane lytic agents. This Xenopus laevis (African clawed frog) protein is Magainins (magainins).